Here is an 864-residue protein sequence, read N- to C-terminus: Protein translocase subunit SecA (864 aa).

ATP-binding positions include Q87, 105–109, and D512; that span reads GEGKT.

Belongs to the SecA family. Monomer and homodimer. Part of the essential Sec protein translocation apparatus which comprises SecA, SecYEG and auxiliary proteins SecDF-YajC and YidC.

Its subcellular location is the cell inner membrane. The protein localises to the cytoplasm. It catalyses the reaction ATP + H2O + cellular proteinSide 1 = ADP + phosphate + cellular proteinSide 2.. Functionally, part of the Sec protein translocase complex. Interacts with the SecYEG preprotein conducting channel. Has a central role in coupling the hydrolysis of ATP to the transfer of proteins into and across the cell membrane, serving as an ATP-driven molecular motor driving the stepwise translocation of polypeptide chains across the membrane. The polypeptide is Protein translocase subunit SecA (Buchnera aphidicola subsp. Cinara cedri (strain Cc)).